Consider the following 591-residue polypeptide: Tricyclene synthase, chloroplastic (591 aa).

Residues 1–45 (MATLLQIGSGVIYSNALRKTLRRPQSSTCIIVTETTPCNKSPTVQ) constitute a chloroplast transit peptide. Arg302, Asp339, Asp343, Arg481, and Asn484 together coordinate (2E)-geranyl diphosphate. Asp339 and Asp343 together coordinate Mg(2+). The short motif at 339 to 343 (DDIYD) is the DDXXD motif element. Mg(2+) is bound by residues Asn484, Thr488, and Glu492.

Belongs to the terpene synthase family. Tpsb subfamily. The cofactor is Mg(2+). Requires Mn(2+) as cofactor. Predominantly expressed in flowers but also in leaves, siliques and in stems.

The protein localises to the plastid. It is found in the chloroplast stroma. It carries out the reaction (2E)-geranyl diphosphate = beta-myrcene + diphosphate. It catalyses the reaction (2E)-geranyl diphosphate = tricyclene + diphosphate. The catalysed reaction is (2E)-geranyl diphosphate = (E)-beta-ocimene + diphosphate. It participates in secondary metabolite biosynthesis; terpenoid biosynthesis. Involved in monoterpene (C10) biosynthesis. The major product is beta-myrcene (56%) followed by (E)-beta-ocimene (20%) and minor amounts (less than 5%) of the cyclic monoterpene (-)-limonene, (+)-limonene, 2-carene and tricyclene. The sequence is that of Tricyclene synthase, chloroplastic from Arabidopsis thaliana (Mouse-ear cress).